Reading from the N-terminus, the 163-residue chain is Glutathione peroxidase 1 (163 aa).

Residue cysteine 36 is part of the active site.

The protein belongs to the glutathione peroxidase family.

The protein localises to the cytoplasm. It catalyses the reaction 2 glutathione + H2O2 = glutathione disulfide + 2 H2O. Functionally, may constitute a glutathione peroxidase-like protective system against oxidative stresses. The protein is Glutathione peroxidase 1 (gpx-1) of Caenorhabditis elegans.